Here is a 288-residue protein sequence, read N- to C-terminus: Syntaxin-1A (288 aa).

Positions 1–13 (MKDRTQELRTAKD) are enriched in basic and acidic residues. A disordered region spans residues 1 to 20 (MKDRTQELRTAKDSDDDDDV). Residues 1 to 265 (MKDRTQELRT…KYQSKARRKK (265 aa)) lie on the Cytoplasmic side of the membrane. Phosphoserine occurs at positions 14, 64, and 95. A coiled-coil region spans residues 68-109 (DEKTKEELEELMSDIKKTANKVRSKLKSIEQSIEQEEGLNRS). S188 carries the phosphoserine; by DAPK1 modification. In terms of domain architecture, t-SNARE coiled-coil homology spans 192 to 254 (LSEIETRHSE…ERAVSDTKKA (63 aa)). Glycyl lysine isopeptide (Lys-Gly) (interchain with G-Cter in SUMO) cross-links involve residues K252, K253, and K256. A helical; Anchor for type IV membrane protein transmembrane segment spans residues 266-288 (IMIVICCVVLGIVIASTFGGIFG).

This sequence belongs to the syntaxin family. As to quaternary structure, part of the SNARE core complex containing SNAP25, VAMP2 and STX1A; this complex constitutes the basic catalytic machinery of the complex neurotransmitter release apparatus. The SNARE complex interacts with CPLX1. Interacts with STXBP1. The interaction with STXBP1 promotes assembly of the SNARE complex. Interacts (via C-terminus) with KCNB1 (via C-terminus); the interaction increases in a calcium-dependent manner and induces a pore-independent enhancement of exocytosis in neuroendocrine cells, chromaffin cells, pancreatic beta cells and from the soma of dorsal root ganglia (DRG) neurons. Interacts with SYTL4. Interacts with STXBP6. Interacts with PLCL1 (via C2 domain). Interacts with OTOF. Interacts with LGI3. Interacts (via the H3 domain) with SLC6A4 (via the N-terminus); this interaction regulates SLC4A6 channel conductance in thalamocortical neurons. Interacts with SYT6 and SYT8; the interaction is Ca(2+)-dependent. Interacts with VAMP8. Interacts with SNAP23. Interacts with VAPA and SYBU. Interacts with PRRT2. Interacts with SEPT8. Interacts with STXBP5L. Interacts with synaptotagmin-1/SYT1. Interacts with SEPTIN5; in the cerebellar cortex. Interacts with SEPTIN4; in the striatum. Post-translationally, phosphorylated by CK2. Phosphorylation at Ser-188 by DAPK1 significantly decreases its interaction with STXBP1. Sumoylated, sumoylation is required for regulation of synaptic vesicle endocytosis. In terms of processing, (Microbial infection) Targeted and hydrolyzed by C.botulinum neurotoxin type C (BoNT/C) which inhibits neurotransmitter release. Probably hydrolyzes the 253-Lys-|-Ala-254 bond.

The protein resides in the cytoplasmic vesicle. It localises to the secretory vesicle. Its subcellular location is the synaptic vesicle membrane. It is found in the synapse. The protein localises to the synaptosome. The protein resides in the cell membrane. Functionally, plays an essential role in hormone and neurotransmitter calcium-dependent exocytosis and endocytosis. Part of the SNARE (Soluble NSF Attachment Receptor) complex composed of SNAP25, STX1A and VAMP2 which mediates the fusion of synaptic vesicles with the presynaptic plasma membrane. STX1A and SNAP25 are localized on the plasma membrane while VAMP2 resides in synaptic vesicles. The pairing of the three SNAREs from the N-terminal SNARE motifs to the C-terminal anchors leads to the formation of the SNARE complex, which brings membranes into close proximity and results in final fusion. Participates in the calcium-dependent regulation of acrosomal exocytosis in sperm. Also plays an important role in the exocytosis of hormones such as insulin or glucagon-like peptide 1 (GLP-1). The chain is Syntaxin-1A (STX1A) from Bos taurus (Bovine).